We begin with the raw amino-acid sequence, 453 residues long: Gamma-glutamylpolyamine synthetase GlnA2 (453 aa).

Positions 15 to 100 (RDIRFVRLWF…MFCDILMPDG (86 aa)) constitute a GS beta-grasp domain. In terms of domain architecture, GS catalytic spans 107–453 (PRYVLKRALA…FELRKSLPVL (347 aa)). 2 residues coordinate Mg(2+): glutamate 130 and glutamate 132. Glutamate 182 contributes to the ATP binding site. 2 residues coordinate Mg(2+): glutamate 187 and glutamate 194. Glycine 239 is an L-glutamate binding site. Histidine 243 is a binding site for Mg(2+). Position 245 to 247 (245 to 247 (HLS)) interacts with ATP. The L-glutamate site is built by arginine 296, glutamate 310, and arginine 322. Arginine 322 and arginine 327 together coordinate ATP. Glutamate 342 lines the Mg(2+) pocket. Arginine 344 is a binding site for L-glutamate.

It belongs to the glutamine synthetase family. It depends on Mg(2+) as a cofactor.

It catalyses the reaction putrescine + L-glutamate + ATP = gamma-L-glutamylputrescine + ADP + phosphate + H(+). The enzyme catalyses spermine + L-glutamate + ATP = gamma-L-glutamylspermine + ADP + phosphate + H(+). It carries out the reaction spermidine + L-glutamate + ATP = gamma-L-glutamylspermidine + ADP + phosphate + H(+). The catalysed reaction is cadaverine + L-glutamate + ATP = gamma-L-glutamylcadaverine + ADP + phosphate + H(+). It functions in the pathway amine and polyamine degradation; putrescine degradation. The protein operates within amine and polyamine degradation; spermidine degradation. It participates in amine and polyamine degradation; spermine degradation. No effect on activity with glutamine synthetase (GS) inhibitor methionine sulfoximine (MSO). Involved in the catabolism of polyamines. Catalyzes the ATP-dependent gamma-glutamylation of polyamines. Substrates include putrescine, cadaverine, spermidine and spermine, with a preference for short-chain polyamine putrescine. No complementation of the L-glutamine auxotrophy of an E.coli glnA mutant. Together with GlnA3, enables survival of S.coelicolor under exposure to high local environmental polyamine concentrations, which is toxic to the cells. The chain is Gamma-glutamylpolyamine synthetase GlnA2 from Streptomyces coelicolor (strain ATCC BAA-471 / A3(2) / M145).